Consider the following 256-residue polypeptide: Undecaprenyl-diphosphatase (256 aa).

7 helical membrane passes run 39 to 59, 77 to 97, 101 to 121, 135 to 155, 176 to 196, 206 to 226, and 233 to 253; these read PTDA…AVLV, RTVI…YMLF, FTGG…TGLM, ISTK…LPGV, LMVS…LDCL, LPGA…MDVL, and VSFS…TALP.

It belongs to the UppP family.

It is found in the cell membrane. The catalysed reaction is di-trans,octa-cis-undecaprenyl diphosphate + H2O = di-trans,octa-cis-undecaprenyl phosphate + phosphate + H(+). Catalyzes the dephosphorylation of undecaprenyl diphosphate (UPP). This Methanothrix thermoacetophila (strain DSM 6194 / JCM 14653 / NBRC 101360 / PT) (Methanosaeta thermophila) protein is Undecaprenyl-diphosphatase.